The chain runs to 250 residues: Small ribosomal subunit protein uS2 (250 aa).

Belongs to the universal ribosomal protein uS2 family.

The polypeptide is Small ribosomal subunit protein uS2 (Polaromonas naphthalenivorans (strain CJ2)).